We begin with the raw amino-acid sequence, 154 residues long: Low molecular weight protein-tyrosine-phosphatase PtpA (154 aa).

The Nucleophile role is filled by Cys-8. Arg-14 is a catalytic residue. Asp-120 functions as the Proton donor in the catalytic mechanism.

The protein belongs to the low molecular weight phosphotyrosine protein phosphatase family. As to quaternary structure, interacts with host CORO1A. Phosphorylations at Tyr-122 and Tyr-123 are essential for phosphatase activity.

It is found in the secreted. The catalysed reaction is O-phospho-L-tyrosyl-[protein] + H2O = L-tyrosyl-[protein] + phosphate. Functionally, secreted tyrosine phosphatase that plays a critical role during infection as a bacterial effector protein that counteracts host defenses. Required for intramacrophage survival. The sequence is that of Low molecular weight protein-tyrosine-phosphatase PtpA (ptpA) from Staphylococcus aureus (strain bovine RF122 / ET3-1).